The chain runs to 437 residues: Phosphoglucosamine mutase (437 aa).

Catalysis depends on serine 101, which acts as the Phosphoserine intermediate. Residues serine 101, aspartate 234, aspartate 236, and aspartate 238 each coordinate Mg(2+). Serine 101 is subject to Phosphoserine.

The protein belongs to the phosphohexose mutase family. Mg(2+) is required as a cofactor. Post-translationally, activated by phosphorylation.

The catalysed reaction is alpha-D-glucosamine 1-phosphate = D-glucosamine 6-phosphate. Catalyzes the conversion of glucosamine-6-phosphate to glucosamine-1-phosphate. The polypeptide is Phosphoglucosamine mutase (Thermus thermophilus (strain ATCC 27634 / DSM 579 / HB8)).